The following is a 383-amino-acid chain: D-alanine--D-alanine ligase (383 aa).

The ATP-grasp domain maps to 169 to 373; sequence KALLRAAGLP…YPQLVDRLVR (205 aa). Position 196–251 (196–251) interacts with ATP; it reads QERLGLPVFVKPARGGSSIGISRVEAWADLDTAIKAARASDPKVLVESAIVGREIE. Positions 327, 340, and 342 each coordinate Mg(2+).

This sequence belongs to the D-alanine--D-alanine ligase family. The cofactor is Mg(2+). Requires Mn(2+) as cofactor.

The protein resides in the cytoplasm. The enzyme catalyses 2 D-alanine + ATP = D-alanyl-D-alanine + ADP + phosphate + H(+). The protein operates within cell wall biogenesis; peptidoglycan biosynthesis. Its function is as follows. Cell wall formation. This chain is D-alanine--D-alanine ligase, found in Frankia casuarinae (strain DSM 45818 / CECT 9043 / HFP020203 / CcI3).